Here is a 109-residue protein sequence, read N- to C-terminus: RYamide neuropeptides (109 aa).

Residues 1–22 (MNECVNKLLHLKFLFYFILGIQ) form the signal peptide. Tyr-33 carries the post-translational modification Tyrosine amide. Residues 36-53 (STTYDESLKSRRIFIVPR) constitute a propeptide that is removed on maturation. Position 63 is a tyrosine amide (Tyr-63). Positions 67 to 109 (SGKYLCLSREINKLIVRKRLRNNDKERTPTLSFITKHFLMRNT) are excised as a propeptide.

Its subcellular location is the secreted. Neuropeptides RYamide-1 and RYamide-2 are ligands for the G-protein coupled receptor RYa-R. May suppress feeding behavior. In Drosophila melanogaster (Fruit fly), this protein is RYamide neuropeptides.